Consider the following 75-residue polypeptide: Large ribosomal subunit protein uL24c (75 aa).

This sequence belongs to the universal ribosomal protein uL24 family. As to quaternary structure, part of the 50S ribosomal subunit.

The protein localises to the plastid. It is found in the chloroplast. One of two assembly initiator proteins, it binds directly to the 5'-end of the 23S rRNA, where it nucleates assembly of the 50S subunit. This Cyanidioschyzon merolae (strain NIES-3377 / 10D) (Unicellular red alga) protein is Large ribosomal subunit protein uL24c (rpl24).